A 380-amino-acid chain; its full sequence is Cytochrome b (380 aa).

A run of 4 helical transmembrane segments spans residues 34–54 (FGSLLGICLMTQILTGLLLAM), 78–99 (WLIRNLHANGASLFFICIYLHI), 114–134 (WNTGVILLLTLMATAFVGYVL), and 179–199 (FFALHFLLPFIIAGLTLIHLT). Heme b is bound by residues H84 and H98. Heme b is bound by residues H183 and H197. H202 is a binding site for a ubiquinone. Helical transmembrane passes span 227–247 (TKDILGFIILLLPLMTLAMFA), 289–309 (LGGVLALAASVLVLFLAPFLH), 321–341 (LSQLLFWTLVANLFILTWIGS), and 348–368 (FIITGQLASLTYFTILLILFP).

It belongs to the cytochrome b family. As to quaternary structure, the cytochrome bc1 complex contains 11 subunits: 3 respiratory subunits (MT-CYB, CYC1 and UQCRFS1), 2 core proteins (UQCRC1 and UQCRC2) and 6 low-molecular weight proteins (UQCRH/QCR6, UQCRB/QCR7, UQCRQ/QCR8, UQCR10/QCR9, UQCR11/QCR10 and a cleavage product of UQCRFS1). This cytochrome bc1 complex then forms a dimer. Heme b is required as a cofactor.

It localises to the mitochondrion inner membrane. Component of the ubiquinol-cytochrome c reductase complex (complex III or cytochrome b-c1 complex) that is part of the mitochondrial respiratory chain. The b-c1 complex mediates electron transfer from ubiquinol to cytochrome c. Contributes to the generation of a proton gradient across the mitochondrial membrane that is then used for ATP synthesis. The protein is Cytochrome b (MT-CYB) of Aphanotriccus audax (Black-billed flycatcher).